The sequence spans 137 residues: MRILGLDIGDRTIGIAISDPLGFTAQGITTIRRKSEAYDLEEIKKICDKYEVDTIVSGLPKNMNGTLGPQSEKVLEFCDLIKEHLNIEIKMWDERLTTVAATRAMLEADLSRSKRKKIVDKVAATYILQGYLDSLSK.

Belongs to the YqgF nuclease family.

It localises to the cytoplasm. Functionally, could be a nuclease involved in processing of the 5'-end of pre-16S rRNA. This is Putative pre-16S rRNA nuclease from Clostridium botulinum (strain 657 / Type Ba4).